Consider the following 775-residue polypeptide: Rab3 GTPase-activating protein catalytic subunit (775 aa).

Phosphoserine occurs at positions 173, 330, 373, 375, and 384. The disordered stretch occupies residues 324–351; it reads DEGKKTSPSDSMTKAYPADAGKAGGQLG. The tract at residues 386 to 414 is disordered; it reads AEDLRGNGQESTKKGGPKDMAPLKPEGRL. A Phosphoserine modification is found at Ser458.

Belongs to the Rab3-GAP catalytic subunit family. As to quaternary structure, the Rab3 GTPase-activating complex is a heterodimer composed of Rab3gap1 and Rab3gap2. The Rab3 GTPase-activating complex interacts with DMXL2. Interacts with LMAN1.

The protein localises to the cytoplasm. It is found in the endoplasmic reticulum. The protein resides in the golgi apparatus. It localises to the cis-Golgi network. Functionally, catalytic subunit of the Rab3 GTPase-activating (Rab3GAP) complex composed of RAB3GAP1 and RAB3GAP2, which has GTPase-activating protein (GAP) activity towards various Rab3 subfamily members (RAB3A, RAB3B, RAB3C and RAB3D), RAB5A and RAB43, and guanine nucleotide exchange factor (GEF) activity towards RAB18. As part of the Rab3GAP complex, acts as a GAP for Rab3 proteins by converting active RAB3-GTP to the inactive form RAB3-GDP. Rab3 proteins are involved in regulated exocytosis of neurotransmitters and hormones. The Rab3GAP complex, acts as a GEF for RAB18 by promoting the conversion of inactive RAB18-GDP to the active form RAB18-GTP. Recruits and stabilizes RAB18 at the cis-Golgi membrane where RAB18 is most likely activated. Also involved in RAB18 recruitment at the endoplasmic reticulum (ER) membrane where it maintains proper ER structure. Required for normal eye and brain development. May participate in neurodevelopmental processes such as proliferation, migration and differentiation before synapse formation, and non-synaptic vesicular release of neurotransmitters. This chain is Rab3 GTPase-activating protein catalytic subunit, found in Rattus norvegicus (Rat).